A 369-amino-acid chain; its full sequence is Anhydro-N-acetylmuramic acid kinase (369 aa).

Residue 12-19 (GTSLDGVD) participates in ATP binding.

The protein belongs to the anhydro-N-acetylmuramic acid kinase family.

It catalyses the reaction 1,6-anhydro-N-acetyl-beta-muramate + ATP + H2O = N-acetyl-D-muramate 6-phosphate + ADP + H(+). It participates in amino-sugar metabolism; 1,6-anhydro-N-acetylmuramate degradation. Its pathway is cell wall biogenesis; peptidoglycan recycling. Catalyzes the specific phosphorylation of 1,6-anhydro-N-acetylmuramic acid (anhMurNAc) with the simultaneous cleavage of the 1,6-anhydro ring, generating MurNAc-6-P. Is required for the utilization of anhMurNAc either imported from the medium or derived from its own cell wall murein, and thus plays a role in cell wall recycling. This is Anhydro-N-acetylmuramic acid kinase from Shigella boydii serotype 18 (strain CDC 3083-94 / BS512).